The chain runs to 414 residues: Arrestin domain-containing protein 3 (414 aa).

Short sequence motifs (PPxY motif) lie at residues 346–349 (PPSY) and 391–394 (PPLY). A disordered region spans residues 393-414 (LYSEIDPNPDQPADDRPSCPSR). Residues 405-414 (ADDRPSCPSR) are compositionally biased toward basic and acidic residues.

Belongs to the arrestin family. In terms of assembly, interacts (via PPxY motifs) with NEDD4 (via WW domains). Interacts with ADRB2. Interacts with ADRB3. Interacts with HGS (via PPxY motifs). Does not bind TXN (thioredoxin). Interacts with ITCH.

The protein resides in the cytoplasm. Its subcellular location is the cell membrane. The protein localises to the lysosome. It is found in the endosome. It localises to the early endosome. Functionally, adapter protein that plays a role in regulating cell-surface expression of adrenergic receptors and probably also other G protein-coupled receptors. Plays a role in NEDD4-mediated ubiquitination and endocytosis af activated ADRB2 and subsequent ADRB2 degradation. May recruit NEDD4 to ADRB2. Alternatively, may function as adapter protein that does not play a major role in recruiting NEDD4 to ADRB2, but rather plays a role in a targeting ADRB2 to endosomes. This is Arrestin domain-containing protein 3 (ARRDC3) from Bos taurus (Bovine).